The sequence spans 83 residues: MPKAPAREKVLKKKACTFCKESKSGNVSIDYKDTTLLRKYVSDRGKIRARRVTGNCVQHQRDIAVAVKNSREVALLPYVSTAR.

The protein belongs to the bacterial ribosomal protein bS18 family. As to quaternary structure, part of the 30S ribosomal subunit. Forms a tight heterodimer with protein bS6.

Its function is as follows. Binds as a heterodimer with protein bS6 to the central domain of the 16S rRNA, where it helps stabilize the platform of the 30S subunit. This Nocardia farcinica (strain IFM 10152) protein is Small ribosomal subunit protein bS18A.